The chain runs to 430 residues: L-cysteine:1D-myo-inositol 2-amino-2-deoxy-alpha-D-glucopyranoside ligase (430 aa).

Cysteine 48 contributes to the Zn(2+) binding site. Residues 48–51, threonine 63, and 86–88 contribute to the L-cysteinyl-5'-AMP site; these read CGIT and NIT. The 'HIGH' region signature appears at 50 to 60; it reads ITPYDSTHLGH. The 'ERGGDP' region motif lies at 192–197; the sequence is ERGGDP. Position 232 (tryptophan 232) interacts with L-cysteinyl-5'-AMP. Cysteine 236 lines the Zn(2+) pocket. Position 254–256 (254–256) interacts with L-cysteinyl-5'-AMP; sequence GSD. Histidine 261 is a Zn(2+) binding site. Isoleucine 288 contacts L-cysteinyl-5'-AMP. Positions 294–298 match the 'KMSKS' region motif; the sequence is KMSKS.

This sequence belongs to the class-I aminoacyl-tRNA synthetase family. MshC subfamily. In terms of assembly, monomer. Zn(2+) is required as a cofactor.

It carries out the reaction 1D-myo-inositol 2-amino-2-deoxy-alpha-D-glucopyranoside + L-cysteine + ATP = 1D-myo-inositol 2-(L-cysteinylamino)-2-deoxy-alpha-D-glucopyranoside + AMP + diphosphate + H(+). Catalyzes the ATP-dependent condensation of GlcN-Ins and L-cysteine to form L-Cys-GlcN-Ins. In Corynebacterium efficiens (strain DSM 44549 / YS-314 / AJ 12310 / JCM 11189 / NBRC 100395), this protein is L-cysteine:1D-myo-inositol 2-amino-2-deoxy-alpha-D-glucopyranoside ligase (mshC).